The chain runs to 259 residues: Phosphate import ATP-binding protein PstB (259 aa).

The 245-residue stretch at Ala-10–Ile-254 folds into the ABC transporter domain. Gly-43 to Ser-50 is a binding site for ATP.

This sequence belongs to the ABC transporter superfamily. Phosphate importer (TC 3.A.1.7) family. In terms of assembly, the complex is composed of two ATP-binding proteins (PstB), two transmembrane proteins (PstC and PstA) and a solute-binding protein (PstS).

The protein localises to the cell inner membrane. It carries out the reaction phosphate(out) + ATP + H2O = ADP + 2 phosphate(in) + H(+). In terms of biological role, part of the ABC transporter complex PstSACB involved in phosphate import. Responsible for energy coupling to the transport system. This Methylobacillus flagellatus (strain ATCC 51484 / DSM 6875 / VKM B-1610 / KT) protein is Phosphate import ATP-binding protein PstB.